The following is a 1208-amino-acid chain: Lysine-specific demethylase JMJ17 (1208 aa).

The PHD-type 1; degenerate zinc-finger motif lies at 1 to 36; the sequence is MLLCDSCNKGWHIYCLSPPLKHIPLGNWYCLECLNT. Zn(2+) contacts are provided by Cys4, Cys7, Cys30, and Cys33. A JmjC domain is found at 126–292; it reads EYCGSPWNLN…YGGSGAELYR (167 aa). 3 residues coordinate Fe cation: His172, Glu174, and His260. Positions 369, 372, 383, 385, 392, 395, 400, and 402 each coordinate Zn(2+). The C5HC2 zinc-finger motif lies at 369–421; it reads CIICQQFLHLSAIVCNCRPSVFACLEHWKHLCECEPTKLRLEYRYTLAELDMM. The Nuclear localization signal motif lies at 613–620; the sequence is SKKISSAK. The PHD-type 2 zinc finger occupies 1099 to 1145; sequence MLHCICLKPYNSRSMVSCSQCGEWYHTYCLKLHWRPKAYVCSACCPL. 8 residues coordinate Zn(2+): Cys1102, Cys1104, Cys1116, Cys1119, His1124, Cys1127, Cys1139, and Cys1142.

This sequence belongs to the JARID1 histone demethylase family. Requires Fe(2+) as cofactor. Expressed in inflorescences, roots, seedlings and siliques, and, at low levels, in leaves and stems.

The protein resides in the nucleus. It carries out the reaction N(6),N(6),N(6)-trimethyl-L-lysyl(4)-[histone H3] + 2-oxoglutarate + O2 = N(6),N(6)-dimethyl-L-lysyl(4)-[histone H3] + formaldehyde + succinate + CO2. The enzyme catalyses N(6),N(6)-dimethyl-L-lysyl(4)-[histone H3] + 2-oxoglutarate + O2 = N(6)-methyl-L-lysyl(4)-[histone H3] + formaldehyde + succinate + CO2. It catalyses the reaction N(6)-methyl-L-lysyl(4)-[histone H3] + 2-oxoglutarate + O2 = L-lysyl(4)-[histone H3] + formaldehyde + succinate + CO2. The catalysed reaction is N(6),N(6),N(6)-trimethyl-L-lysyl(4)-[histone H3] + 3 2-oxoglutarate + 3 O2 = L-lysyl(4)-[histone H3] + 3 formaldehyde + 3 succinate + 3 CO2. In terms of biological role, functions as a histone H3 'Lys-4' (H3K4me) demethylase involved in the regulation of gene expression. Active on H3K4me1, H3K4me2 and H3K4me3. Repressor of the abscisic acid (ABA) signaling pathway, especially during stomatal closure regulation. Negative regulator of responses to dehydration stress by binding directly to the chromatin of SRK2E/OST1 and demethylating H3K4me3 to regulates its expression. Together with JMJ14 and JMJ16, required for plant growth and development. This Arabidopsis thaliana (Mouse-ear cress) protein is Lysine-specific demethylase JMJ17.